Reading from the N-terminus, the 455-residue chain is MDSLSIVILAAGKGKRMYSSLPKVLHPIGGEPMLARVIRTARALNPSRLVVVYGHGGEQVRARIQDADIVWAEQAEQLGTGHALKMALPHLPQDGKTLVLYGDVPLTKASTLQRLEQAAAGGMAVLTDVLADASGYGRMVRGADGKLQAIVEHKDCTPEQLAIREINTGMMALPNARLADWLSALNNGNAQGEYYLTDVLELAVKDGVAVESASVDASWEAAGVNNKVQLAELERILQANQARALLEAGVTLADPARIDIRGELKHGMDVSIDIGCVFEGAVELGDQVEIGAHCVLKNVKIASGTRIAPFSHLEDAVVGAECRIGPYARLRPGAELAGHVHIGNFVEVKKSKIGEGSKVNHLSYVGDAEIGRKVNVGAGSVTCNYDGVNKFKTIIGDNVFVGSGTLMVAPVKLERDSTIGAGSVISKDTPAGELTVARARQVTVPGWKRPQKKSG.

The segment at 1-227 is pyrophosphorylase; that stretch reads MDSLSIVILA…SWEAAGVNNK (227 aa). UDP-N-acetyl-alpha-D-glucosamine-binding positions include 9–12, lysine 23, glutamine 74, 79–80, 101–103, glycine 137, glutamate 152, asparagine 167, and asparagine 225; these read LAAG, GT, and YGD. Aspartate 103 contributes to the Mg(2+) binding site. Asparagine 225 contributes to the Mg(2+) binding site. Positions 228-248 are linker; sequence VQLAELERILQANQARALLEA. The N-acetyltransferase stretch occupies residues 249–455; it reads GVTLADPARI…GWKRPQKKSG (207 aa). Positions 331 and 349 each coordinate UDP-N-acetyl-alpha-D-glucosamine. Histidine 361 acts as the Proton acceptor in catalysis. The UDP-N-acetyl-alpha-D-glucosamine site is built by tyrosine 364 and asparagine 375. Residues alanine 378, 384–385, serine 403, alanine 421, and arginine 438 contribute to the acetyl-CoA site; that span reads NY.

The protein in the N-terminal section; belongs to the N-acetylglucosamine-1-phosphate uridyltransferase family. This sequence in the C-terminal section; belongs to the transferase hexapeptide repeat family. As to quaternary structure, homotrimer. Requires Mg(2+) as cofactor.

The protein localises to the cytoplasm. It carries out the reaction alpha-D-glucosamine 1-phosphate + acetyl-CoA = N-acetyl-alpha-D-glucosamine 1-phosphate + CoA + H(+). The enzyme catalyses N-acetyl-alpha-D-glucosamine 1-phosphate + UTP + H(+) = UDP-N-acetyl-alpha-D-glucosamine + diphosphate. The protein operates within nucleotide-sugar biosynthesis; UDP-N-acetyl-alpha-D-glucosamine biosynthesis; N-acetyl-alpha-D-glucosamine 1-phosphate from alpha-D-glucosamine 6-phosphate (route II): step 2/2. It functions in the pathway nucleotide-sugar biosynthesis; UDP-N-acetyl-alpha-D-glucosamine biosynthesis; UDP-N-acetyl-alpha-D-glucosamine from N-acetyl-alpha-D-glucosamine 1-phosphate: step 1/1. It participates in bacterial outer membrane biogenesis; LPS lipid A biosynthesis. Functionally, catalyzes the last two sequential reactions in the de novo biosynthetic pathway for UDP-N-acetylglucosamine (UDP-GlcNAc). The C-terminal domain catalyzes the transfer of acetyl group from acetyl coenzyme A to glucosamine-1-phosphate (GlcN-1-P) to produce N-acetylglucosamine-1-phosphate (GlcNAc-1-P), which is converted into UDP-GlcNAc by the transfer of uridine 5-monophosphate (from uridine 5-triphosphate), a reaction catalyzed by the N-terminal domain. This is Bifunctional protein GlmU from Chromobacterium violaceum (strain ATCC 12472 / DSM 30191 / JCM 1249 / CCUG 213 / NBRC 12614 / NCIMB 9131 / NCTC 9757 / MK).